Here is an 85-residue protein sequence, read N- to C-terminus: U4-theraphotoxin-Hhn1c (85 aa).

The N-terminal stretch at 1-22 (MKVTLIAILTCAAVLVLHTTAA) is a signal peptide. Residues 23–48 (EELEAESQLMEVGMPDTELAAVDEER) constitute a propeptide that is removed on maturation. 3 cysteine pairs are disulfide-bonded: Cys52–Cys66, Cys56–Cys77, and Cys71–Cys82.

The protein belongs to the neurotoxin 12 (Hwtx-2) family. 02 (Hwtx-2) subfamily. In terms of tissue distribution, expressed by the venom gland.

The protein resides in the secreted. Its function is as follows. Postsynaptic neurotoxin. In Cyriopagopus hainanus (Chinese bird spider), this protein is U4-theraphotoxin-Hhn1c.